Here is a 128-residue protein sequence, read N- to C-terminus: Small ribosomal subunit protein uS12 (128 aa).

At Asp89 the chain carries 3-methylthioaspartic acid. The disordered stretch occupies residues 101-128 (SLDTSGVADRRNGRSKYGAKRPKEGAKK).

This sequence belongs to the universal ribosomal protein uS12 family. Part of the 30S ribosomal subunit. Contacts proteins S8 and S17. May interact with IF1 in the 30S initiation complex.

Its function is as follows. With S4 and S5 plays an important role in translational accuracy. Interacts with and stabilizes bases of the 16S rRNA that are involved in tRNA selection in the A site and with the mRNA backbone. Located at the interface of the 30S and 50S subunits, it traverses the body of the 30S subunit contacting proteins on the other side and probably holding the rRNA structure together. The combined cluster of proteins S8, S12 and S17 appears to hold together the shoulder and platform of the 30S subunit. The sequence is that of Small ribosomal subunit protein uS12 from Chloroherpeton thalassium (strain ATCC 35110 / GB-78).